The following is a 160-amino-acid chain: SsrA-binding protein (160 aa).

A disordered region spans residues 132-160 (KEFDKRDTVRERDSNRELQRTMRNKGKEE).

The protein belongs to the SmpB family.

It localises to the cytoplasm. In terms of biological role, required for rescue of stalled ribosomes mediated by trans-translation. Binds to transfer-messenger RNA (tmRNA), required for stable association of tmRNA with ribosomes. tmRNA and SmpB together mimic tRNA shape, replacing the anticodon stem-loop with SmpB. tmRNA is encoded by the ssrA gene; the 2 termini fold to resemble tRNA(Ala) and it encodes a 'tag peptide', a short internal open reading frame. During trans-translation Ala-aminoacylated tmRNA acts like a tRNA, entering the A-site of stalled ribosomes, displacing the stalled mRNA. The ribosome then switches to translate the ORF on the tmRNA; the nascent peptide is terminated with the 'tag peptide' encoded by the tmRNA and targeted for degradation. The ribosome is freed to recommence translation, which seems to be the essential function of trans-translation. The polypeptide is SsrA-binding protein (Pseudomonas entomophila (strain L48)).